The following is an 83-amino-acid chain: Small ribosomal subunit protein eS21 (83 aa).

The protein belongs to the eukaryotic ribosomal protein eS21 family. As to quaternary structure, component of the 40S small ribosomal subunit.

The protein localises to the cytoplasm. The protein resides in the cytosol. It is found in the rough endoplasmic reticulum. This Agriotes lineatus (Lined click beetle) protein is Small ribosomal subunit protein eS21 (RpS21).